The chain runs to 31 residues: Cytochrome b6-f complex subunit 6 (31 aa).

Residues 3 to 23 form a helical membrane-spanning segment; sequence ILISYFCFLLVFFLFTLILFI.

It belongs to the PetL family. In terms of assembly, the 4 large subunits of the cytochrome b6-f complex are cytochrome b6, subunit IV (17 kDa polypeptide, PetD), cytochrome f and the Rieske protein, while the 4 small subunits are PetG, PetL, PetM and PetN. The complex functions as a dimer.

Its subcellular location is the plastid. The protein resides in the chloroplast thylakoid membrane. In terms of biological role, component of the cytochrome b6-f complex, which mediates electron transfer between photosystem II (PSII) and photosystem I (PSI), cyclic electron flow around PSI, and state transitions. PetL is important for photoautotrophic growth as well as for electron transfer efficiency and stability of the cytochrome b6-f complex. This is Cytochrome b6-f complex subunit 6 from Welwitschia mirabilis (Tree tumbo).